The chain runs to 241 residues: MTEVEARIQLEPSWKAKVGDWLLCSQMQELSAFLRQRKAVGARVFPPGPQIFAAFDATPFDQVKVVILGQDPYHGEGQAHGLCFSVLPGVPVPPSLLNIYKEIQDDLGIARPDHGYLMPWARQGVLLLNAVLTVEQGRAGAHQNKGWEGFTDHVVETLNREREGLVFLLWGSYAQSKGRVIDQARHRVFKAPHPSPLSAHRGFLGCQHFSKTNAHLQRRGISPIDWSLPPRNELDTTSAGA.

The active-site Proton acceptor is D71. Residues 221–241 (ISPIDWSLPPRNELDTTSAGA) are disordered.

Belongs to the uracil-DNA glycosylase (UDG) superfamily. UNG family.

The protein resides in the cytoplasm. It carries out the reaction Hydrolyzes single-stranded DNA or mismatched double-stranded DNA and polynucleotides, releasing free uracil.. Excises uracil residues from the DNA which can arise as a result of misincorporation of dUMP residues by DNA polymerase or due to deamination of cytosine. The polypeptide is Uracil-DNA glycosylase (Xanthomonas oryzae pv. oryzae (strain MAFF 311018)).